A 236-amino-acid polypeptide reads, in one-letter code: Ribonuclease P protein component 3 (236 aa).

This sequence belongs to the eukaryotic/archaeal RNase P protein component 3 family. In terms of assembly, consists of a catalytic RNA component and at least 4-5 protein subunits.

It localises to the cytoplasm. It carries out the reaction Endonucleolytic cleavage of RNA, removing 5'-extranucleotides from tRNA precursor.. Functionally, part of ribonuclease P, a protein complex that generates mature tRNA molecules by cleaving their 5'-ends. The protein is Ribonuclease P protein component 3 of Natronomonas pharaonis (strain ATCC 35678 / DSM 2160 / CIP 103997 / JCM 8858 / NBRC 14720 / NCIMB 2260 / Gabara) (Halobacterium pharaonis).